We begin with the raw amino-acid sequence, 323 residues long: ATP synthase gamma chain (323 aa).

Residues 215-237 form a disordered region; sequence PAGGPAKEQEQGDEGGHGAPSAA. Basic and acidic residues predominate over residues 221-230; sequence KEQEQGDEGG.

This sequence belongs to the ATPase gamma chain family. As to quaternary structure, F-type ATPases have 2 components, CF(1) - the catalytic core - and CF(0) - the membrane proton channel. CF(1) has five subunits: alpha(3), beta(3), gamma(1), delta(1), epsilon(1). CF(0) has three main subunits: a, b and c.

The protein resides in the cell inner membrane. Produces ATP from ADP in the presence of a proton gradient across the membrane. The gamma chain is believed to be important in regulating ATPase activity and the flow of protons through the CF(0) complex. The chain is ATP synthase gamma chain from Sorangium cellulosum (strain So ce56) (Polyangium cellulosum (strain So ce56)).